The chain runs to 256 residues: Astacin-like metalloprotease toxin 2 (256 aa).

The N-terminal stretch at 1–24 (MIPDVGFLVLLTGALFICIKAAPA) is a signal peptide. The propeptide occupies 25 to 52 (TTDVDPTFEGRIVMEGDILIREEQLTER). The Peptidase M12A domain occupies 53–250 (NAIALENMRW…KKINTLYNCP (198 aa)). 2 disulfide bridges follow: cysteine 94/cysteine 249 and cysteine 117/cysteine 136. Position 144 (histidine 144) interacts with Zn(2+). Residue glutamate 145 is part of the active site. Residues histidine 148 and histidine 154 each coordinate Zn(2+).

Monomer. Zn(2+) is required as a cofactor. In terms of tissue distribution, expressed by the venom gland.

It localises to the secreted. Its activity is regulated as follows. Inhibited by 1,10-phenanthroline. Its function is as follows. Zinc metalloprotease. Provoques deadhesion of endothelial cells from cell cultures, and also degradation of fibronectin, fibrinogen and gelatin in vitro. Its role in the venom is not fully understood but it might act as a spreading factor that facilitates diffusion of other venom toxins. Alternatively, it might be involved in the proteolytic processing of other venom toxins or it might play a role in extra-oral digestion of prey. The polypeptide is Astacin-like metalloprotease toxin 2 (Loxosceles intermedia (Brown spider)).